The following is a 185-amino-acid chain: MMGKLIWLMGPSGSGKDSLLAELRLREQTQLLVAHRYITRDASAGSENHIALSEQEFFTRAGQNLLALSWHANGLYYGVGVEIDLWLHAGFDVLVNGSRAHLPQARARYQSALLPVCLQVSPEILRQRLENRGRENASEINARLARAARYTPQDCHTLNNDGSLRQSVDTLLTLIHQKEKHHACL.

Residue 10–17 participates in ATP binding; it reads GPSGSGKD.

This sequence belongs to the ribose 1,5-bisphosphokinase family.

The enzyme catalyses alpha-D-ribose 1,5-bisphosphate + ATP = 5-phospho-alpha-D-ribose 1-diphosphate + ADP. It functions in the pathway metabolic intermediate biosynthesis; 5-phospho-alpha-D-ribose 1-diphosphate biosynthesis; 5-phospho-alpha-D-ribose 1-diphosphate from D-ribose 5-phosphate (route II): step 3/3. Functionally, catalyzes the phosphorylation of ribose 1,5-bisphosphate to 5-phospho-D-ribosyl alpha-1-diphosphate (PRPP). Accepts ATP but not GTP as a phosphoryl donor, and uses ribose 1,5-bisphosphate but not ribose, ribose 1-phosphate, or ribose 5-phosphate as a phosphoryl acceptor. This is Ribose 1,5-bisphosphate phosphokinase PhnN (phnN) from Escherichia coli (strain K12).